We begin with the raw amino-acid sequence, 183 residues long: UPF0397 protein EAT1b_2102 (183 aa).

5 helical membrane passes run I9–P29, A42–I62, S74–A94, A117–A137, and G147–V167.

Belongs to the UPF0397 family.

It is found in the cell membrane. The sequence is that of UPF0397 protein EAT1b_2102 from Exiguobacterium sp. (strain ATCC BAA-1283 / AT1b).